Here is a 508-residue protein sequence, read N- to C-terminus: MIITALIAIAVGFLIGYLARKIIAESKIKSAENLARTILESAKRDAENKKRELLLEAKEEIHRMRTDLEKEIRDRRGELQRLEKRLLQKEETLDKRAETLEQKESFLEEKQKEIQQLEEQISLLYQKEIEELERISGLSREEAKAILLENVQKDIQHEMAVMIKEMENKAKEEAEMKAREIIGNAIQRCAADHAAETTVSVVTLPNDEMKGRIIGREGRNIRTIETLTGIDLIIDDTPEAVVISGFDPIRREVARIALEKLIEDGRIHPARIEEMVEKAKKEVDNMILKAGEEAAFEVGIHGLHPELIKLLGRLKFRTSYGQNVLKHSIEVAHLAGLMAYELGADALVAKRAGLLHDIGKAVDHEVEGPHVMIGAELAKRYHESDAVIHAIMAHHNDVEPQTVEAVLVQAADAISAARPGARREALEAYIKRLDKLEQIANSFEGVEKSYAIQAGREIRIMVKPEIVDDDDIVILARNISKKIEEEVEYPGQIKVTVIRETVAVDYAK.

Residues 2–22 (IITALIAIAVGFLIGYLARKI) form a helical membrane-spanning segment. Residues 198–261 (TVSVVTLPND…EVARIALEKL (64 aa)) enclose the KH domain. In terms of domain architecture, HD spans 324–417 (VLKHSIEVAH…VQAADAISAA (94 aa)).

The protein belongs to the RNase Y family.

Its subcellular location is the cell membrane. Endoribonuclease that initiates mRNA decay. The protein is Ribonuclease Y of Thermoanaerobacter pseudethanolicus (strain ATCC 33223 / 39E) (Clostridium thermohydrosulfuricum).